An 806-amino-acid chain; its full sequence is MKKGIIRFLLVSFVLFFALSTGITGVQAAPASSKTSADLEKAEVFGDIDMTTSKKTTVIVELKEKSLAEAKEAGESQSKSKLKTARTKAKNKAIKAVKNGKVNREYEQVFSGFSMKLPANEIPKLLAVKDVKAVYPNVTYKTDNMKDKDVTISEDAVSPQMDDSAPYIGANDAWDLGYTGKGIKVAIIDTGVEYNHPDLKKNFGQYKGYDFVDNDYDPKETPTGDPRGEATDHGTHVAGTVAANGTIKGVAPDATLLAYRVLGPGGSGTTENVIAGVERAVQDGADVMNLSLGNSLNNPDWATSTALDWAMSEGVVAVTSNGNSGPNGWTVGSPGTSREAISVGATQLPLNEYAVTFGSYSSAKVMGYNKEDDVKALNNKEVELVEAGIGEAKDFEGKDLTGKVAVVKRGSIAFVDKADNAKKAGAIGMVVYNNLSGEIEANVPGMSVPTIKLSLEDGEKLVSALKAGETKTTFKLTVSKALGEQVADFSSRGPVMDTWMIKPDISAPGVNIVSTIPTHDPDHPYGYGSKQGTSMASPHIAGAVAVIKQAKPKWSVEQIKAAIMNTAVTLKDSDGEVYPHNAQGAGSARIMNAIKADSLVSPGSYSYGTFLKENGNETKNETFTIENQSSIRKSYTLEYSFNGSGISTSGTSRVVIPAHQTGKATAKVKVNTKKTKAGTYEGTVIVREGGKTVAKVPTLLIVKEPDYPRVTSVSVSEGSVQGTYQIETYLPAGAEELAFLVYDSNLDFAGQAGIYKNQDKGYQYFDWDGTINGGTKLPAGEYYLLAYAANKGKSSQVLTEEPFTVE.

The signal sequence occupies residues 1-28; sequence MKKGIIRFLLVSFVLFFALSTGITGVQA. Residues 29–160 constitute a propeptide that is removed on maturation; that stretch reads APASSKTSAD…TISEDAVSPQ (132 aa). The Inhibitor I9 domain maps to 57–142; it reads TVIVELKEKS…AVYPNVTYKT (86 aa). A Peptidase S8 domain is found at 158-597; sequence SPQMDDSAPY…ARIMNAIKAD (440 aa). Residues Asp189 and His233 each act as charge relay system in the active site. The PA domain occupies 383 to 461; it reads ELVEAGIGEA…KLSLEDGEKL (79 aa). Ser534 (charge relay system) is an active-site residue.

Belongs to the peptidase S8 family. Post-translationally, probably undergoes C-terminal processing or proteolysis. Auto-processed to form active enzymes of several different molecular weights.

The protein localises to the secreted. The protein resides in the cell wall. Its activity is regulated as follows. Activity is inhibited by phenylmethylsulfonyl fluoride (PMSF), but not by EDTA. In terms of biological role, serine protease. Involved in the production of the competence and sporulation stimulating factor CSF. Is directly involved in the processing of pro-CSF to CSF. Can also cleave pro-PhrA to PhrA, but cannot cleave pro-PhrE. Shows fibrinolytic activity in vitro. Not essential for growth or sporulation. The polypeptide is Minor extracellular protease Vpr (Bacillus subtilis (strain 168)).